The primary structure comprises 260 residues: MLLNALASLGHKGIKTLRTFGRAGLMLFNALVGKPEFRKHAPLLVRQLYNVGVLSMLIIVVSGVFIGMVLGLQGYLVLTTYSAETSLGMLVALSLLRELGPVVAALLFAGRAGSALTAEIGLMRATEQLSSMEMMAVDPLRRVISPRFWAGVISLPLLTVIFVAVGIWGGSLVGVSWKGIDSGFFWSAMQNAVDWRMDLVNCLIKSVVFAITVTWISLFNGYDAIPTSAGISRATTRTVVHSSLAVLGLDFVLTALMFGN.

The Cytoplasmic segment spans residues 1-50; that stretch reads MLLNALASLGHKGIKTLRTFGRAGLMLFNALVGKPEFRKHAPLLVRQLYN. The chain crosses the membrane as a helical span at residues 51–71; the sequence is VGVLSMLIIVVSGVFIGMVLG. Residues 72-88 lie on the Periplasmic side of the membrane; sequence LQGYLVLTTYSAETSLG. The helical transmembrane segment at 89–109 threads the bilayer; that stretch reads MLVALSLLRELGPVVAALLFA. At 110-147 the chain is on the cytoplasmic side; it reads GRAGSALTAEIGLMRATEQLSSMEMMAVDPLRRVISPR. The helical transmembrane segment at 148–168 threads the bilayer; it reads FWAGVISLPLLTVIFVAVGIW. At 169–198 the chain is on the periplasmic side; the sequence is GGSLVGVSWKGIDSGFFWSAMQNAVDWRMD. Residues 199-219 form a helical membrane-spanning segment; it reads LVNCLIKSVVFAITVTWISLF. The Cytoplasmic segment spans residues 220 to 238; it reads NGYDAIPTSAGISRATTRT. The chain crosses the membrane as a helical span at residues 239–259; it reads VVHSSLAVLGLDFVLTALMFG. Position 260 (Asn-260) is a topological domain, periplasmic.

It belongs to the MlaE permease family. As to quaternary structure, the complex is composed of two ATP-binding proteins (MlaF), two transmembrane proteins (MlaE), two cytoplasmic solute-binding proteins (MlaB) and six periplasmic solute-binding proteins (MlaD).

The protein localises to the cell inner membrane. Functionally, part of the ABC transporter complex MlaFEDB, which is involved in a phospholipid transport pathway that maintains lipid asymmetry in the outer membrane by retrograde trafficking of phospholipids from the outer membrane to the inner membrane. Probably responsible for the translocation of the substrate across the membrane. The polypeptide is Intermembrane phospholipid transport system permease protein MlaE (Escherichia coli O157:H7).